The following is a 110-amino-acid chain: DNA-directed RNA polymerase subunit omega (110 aa).

Belongs to the RNA polymerase subunit omega family. In terms of assembly, the RNAP catalytic core consists of 2 alpha, 1 beta, 1 beta' and 1 omega subunit. When a sigma factor is associated with the core the holoenzyme is formed, which can initiate transcription.

It catalyses the reaction RNA(n) + a ribonucleoside 5'-triphosphate = RNA(n+1) + diphosphate. Promotes RNA polymerase assembly. Latches the N- and C-terminal regions of the beta' subunit thereby facilitating its interaction with the beta and alpha subunits. This Mycobacterium bovis (strain ATCC BAA-935 / AF2122/97) protein is DNA-directed RNA polymerase subunit omega (rpoZ).